The chain runs to 129 residues: MQDLISLEIVTPLGMIYQGEVKSVTLPGSEGEFGVLRGHASLVASLKSGVIDIEKADLNHELIAIDAGHAKVDEDKICVLAKGAVWVCGSDESEIEKNLAQAKDLIKSMSSDNAALAVTFSKLDNARMH.

The protein belongs to the ATPase epsilon chain family. F-type ATPases have 2 components, CF(1) - the catalytic core - and CF(0) - the membrane proton channel. CF(1) has five subunits: alpha(3), beta(3), gamma(1), delta(1), epsilon(1). CF(0) has three main subunits: a, b and c.

It localises to the cell inner membrane. Functionally, produces ATP from ADP in the presence of a proton gradient across the membrane. The sequence is that of ATP synthase epsilon chain from Campylobacter jejuni subsp. doylei (strain ATCC BAA-1458 / RM4099 / 269.97).